Consider the following 1533-residue polypeptide: Actin cytoskeleton-regulatory complex protein pan-1 (1533 aa).

The disordered stretch occupies residues 1-204 (MYSNSNAFLG…PPPPVKPQAT (204 aa)). Low complexity-rich tracts occupy residues 19–46 (QQPQQQQQQYGAPSPFGQQGPMQPQPTG), 53–136 (GFAP…FQTG), 143–170 (IPQQFQQQQSFQQQQQQQQQPSIQQPQP), and 177–193 (QIQAPAQQPAPTAQGGI). The EH 1 domain occupies 244 to 333 (DQARFETLFK…DHIKNEVSSM (90 aa)). Positions 277–312 (LDGDSLSQIWTLADTTRSGQLHFPEFALAMYLCNLK) constitute an EF-hand 1 domain. Residues 345–359 (AGSSSAPASNAPSFA) are compositionally biased toward low complexity. 2 disordered regions span residues 345–378 (AGSSSAPASNAPSFATQQNTAAVPTIQQPQPQPS) and 393–423 (QQTGFMGQNQGLQPQQTGFPGMNPQPTGYAG). Composition is skewed to polar residues over residues 360–378 (TQQNTAAVPTIQQPQPQPS) and 393–410 (QQTGFMGQNQGLQPQQTG). The EH 2 domain occupies 513 to 602 (EKTRYDALFR…PELVPPSARN (90 aa)). An EF-hand 2 domain is found at 546–581 (LDKPDLERIWTLADNGNKGRLDLDEFAVAMHLIYRK). Residues 649–664 (NRKDATVFKNNDEEVG) are compositionally biased toward basic and acidic residues. Disordered regions lie at residues 649–691 (NRKD…GDDL), 894–917 (IEDSLKEGAPDSTSEHEKRRWEDA), 935–1306 (SRAA…STNP), and 1334–1533 (DAIS…RVLD). Positions 690–890 (DLTIEQLRKK…RDVEDSVREF (201 aa)) form a coiled coil. Basic and acidic residues-rich tracts occupy residues 894-916 (IEDSLKEGAPDSTSEHEKRRWED) and 935-947 (SRAARIRSQDRQG). Positions 968 to 982 (TPSPSISRTSTPAST) are enriched in low complexity. Residues 1026–1209 (ETAAQRAERE…KQLEAIDDED (184 aa)) adopt a coiled-coil conformation. Composition is skewed to basic and acidic residues over residues 1031-1063 (RAERERAERAEKRRQAEEEDARREAERQAKLAE), 1090-1164 (GKAD…EEEK), and 1173-1203 (EAKEKEAQLAARRAEIEAARKREEELRKQLE). Residues 1204–1218 (AIDDEDSSSSDEEGP) show a composition bias toward acidic residues. Positions 1221-1237 (ITPQASTPTVGGSQVGT) are enriched in polar residues. Residues 1279–1293 (SQSSEASTSSVAAPV) show a composition bias toward low complexity. The span at 1348–1367 (DDDDDDWGSEKGSDDEDSDD) shows a compositional bias: acidic residues. Positions 1412 to 1495 (SSPPPPPAPV…PPPGGAPAPS (84 aa)) are enriched in pro residues. Residues 1500-1517 (RPAGLLGEIQAGRALKKT) form the WH2 domain.

Belongs to the PAN1 family. Component of the PAN1 actin cytoskeleton-regulatory complex.

Its subcellular location is the cell membrane. It localises to the endosome membrane. The protein resides in the cytoplasm. It is found in the cytoskeleton. The protein localises to the actin patch. Component of the PAN1 actin cytoskeleton-regulatory complex required for the internalization of endosomes during actin-coupled endocytosis. The complex links the site of endocytosis to the cell membrane-associated actin cytoskeleton. Mediates uptake of external molecules and vacuolar degradation of plasma membrane proteins. Plays a role in the proper organization of the cell membrane-associated actin cytoskeleton and promotes its destabilization. The sequence is that of Actin cytoskeleton-regulatory complex protein pan-1 (pan-1) from Neurospora crassa (strain ATCC 24698 / 74-OR23-1A / CBS 708.71 / DSM 1257 / FGSC 987).